The following is a 213-amino-acid chain: Orotidine 5'-phosphate decarboxylase (213 aa).

Residues Asp9, Lys31, 59 to 68 (DFKVADIPAT), Ser115, 166 to 176 (PGVGAQGGKIE), Gly191, and Arg192 each bind substrate. Catalysis depends on Lys61, which acts as the Proton donor.

It belongs to the OMP decarboxylase family. Type 1 subfamily. Homodimer.

It carries out the reaction orotidine 5'-phosphate + H(+) = UMP + CO2. It functions in the pathway pyrimidine metabolism; UMP biosynthesis via de novo pathway; UMP from orotate: step 2/2. In terms of biological role, catalyzes the decarboxylation of orotidine 5'-monophosphate (OMP) to uridine 5'-monophosphate (UMP). The chain is Orotidine 5'-phosphate decarboxylase from Methanocaldococcus jannaschii (strain ATCC 43067 / DSM 2661 / JAL-1 / JCM 10045 / NBRC 100440) (Methanococcus jannaschii).